The primary structure comprises 929 residues: MAMATRVLAQSTPPSLACYQRNVPSRGSGRSRRSVKMMCSQLQVSGLRMQGFMGLRGNNALDTLGKSRQDFHSKVRQAMNVPKGKASRFTVKAMFERFTEKAIKVIMLAQEEARRLGHNFVGTEQILLGLIGEGTGIAAKVLKSMGINLKDARVEVEKIIGRGSGFVAVEIPFTPRAKRVLELSLEEARQLGHNYIGSEHLLLGLLREGEGVAARVLENLGADPSNIRTQVIRMVGENNEVTANVGGGSSSNKMPTLEEYGTNLTKLAEEGKLDPVVGRQPQIERVVQILGRRTKNNPCLIGEPGVGKTAIAEGLAQRIASGDVPETIEGKKVITLDMGLLVAGTKYRGEFEERLKKLMEEIRQSDEIILFIDEVHTLIGAGAAEGAIDAANILKPALARGELQCIGATTLDEYRKHIEKDPALERRFQPVKVPEPTVDETIQILKGLRERYEIHHKLRYTDESLVAAAQLSYQYISDRFLPDKAIDLIDEAGSRVRLRHAQVPEEARELEKELRQITKEKNEAVRGQDFEKAGTLRDREIELRAEVSAIQAKGKEMSKAESETGEEGPMVTESDIQHIVSSWTGIPVEKVSTDESDRLLKMEETLHKRIIGQDEAVKAISRAIRRARVGLKNPNRPIASFIFSGPTGVGKSELAKALAAYYFGSEEAMIRLDMSEFMERHTVSKLIGSPPGYVGYTEGGQLTEAVRRRPYTVVLFDEIEKAHPDVFNMMLQILEDGRLTDSKGRTVDFKNTLLIMTSNVGSSVIEKGGRRIGFDLDYDEKDSSYNRIKSLVTEELKQYFRPEFLNRLDEMIVFRQLTKLEVKEIADILLKEVFERLKKKEIELQVTERFKERVVDEGYNPSYGARPLRRAIMRLLEDSMAEKMLAREIKEGDSVIVDVDAEGNVTVLNGGSGTPTTSLEEQEDSLPVA.

A chloroplast-targeting transit peptide spans 1–38; the sequence is MAMATRVLAQSTPPSLACYQRNVPSRGSGRSRRSVKMM. The 143-residue stretch at 95–237 folds into the Clp R domain; sequence FERFTEKAIK…RTQVIRMVGE (143 aa). Repeat stretches follow at residues 98-163 and 173-237; these read FTEK…IGRG and FTPR…MVGE. The segment at 257 to 504 is i; sequence LEEYGTNLTK…RVRLRHAQVP (248 aa). An ATP-binding site is contributed by 302 to 309; it reads GEPGVGKT. The UVR domain maps to 511–546; the sequence is EKELRQITKEKNEAVRGQDFEKAGTLRDREIELRAE. Residues 552–571 form a disordered region; the sequence is AKGKEMSKAESETGEEGPMV. Residues 553–562 are compositionally biased toward basic and acidic residues; sequence KGKEMSKAES. The segment at 571–762 is II; the sequence is VTESDIQHIV…LLIMTSNVGS (192 aa). Position 645–652 (645–652) interacts with ATP; sequence GPTGVGKS. The segment covering 908–919 has biased composition (polar residues); that stretch reads LNGGSGTPTTSL. A disordered region spans residues 908–929; sequence LNGGSGTPTTSLEEQEDSLPVA. Over residues 920–929 the composition is skewed to acidic residues; the sequence is EEQEDSLPVA.

It belongs to the ClpA/ClpB family. ClpC subfamily. Homodimer. May form hexamer and interact with Clp core. Interacts (via N-terminus) with CLPS1. Interacts with CLPF. In terms of tissue distribution, highly expressed in rosette leaves. Expressed in roots, stems and inflorescences. Expressed in photosynthetic green tissues with high levels in young, developing leaf tissues.

The protein localises to the plastid. Its subcellular location is the chloroplast stroma. The protein resides in the chloroplast membrane. Its function is as follows. Molecular chaperone that hydrolyzes ATP and is associated with the chloroplast protein import apparatus. May function as the motor for chloroplast protein translocation, as translocation requires ATP hydrolysis in the stroma. May interact with a ClpP-like protease involved in degradation of denatured proteins in the chloroplast. Involved in the regulation of chlorophyll b biosynthesis through the destabilization of chlorophyllide a oxygenase (CAO) protein in response to the accumulation of chlorophyll b. Involved in leaf iron homeostasis. This chain is Chaperone protein ClpC1, chloroplastic, found in Arabidopsis thaliana (Mouse-ear cress).